A 240-amino-acid polypeptide reads, in one-letter code: 2,3,4,5-tetrahydropyridine-2,6-dicarboxylate N-acetyltransferase (240 aa).

It belongs to the transferase hexapeptide repeat family. DapH subfamily.

It carries out the reaction (S)-2,3,4,5-tetrahydrodipicolinate + acetyl-CoA + H2O = L-2-acetamido-6-oxoheptanedioate + CoA. It functions in the pathway amino-acid biosynthesis; L-lysine biosynthesis via DAP pathway; LL-2,6-diaminopimelate from (S)-tetrahydrodipicolinate (acetylase route): step 1/3. Its function is as follows. Catalyzes the transfer of an acetyl group from acetyl-CoA to tetrahydrodipicolinate. The sequence is that of 2,3,4,5-tetrahydropyridine-2,6-dicarboxylate N-acetyltransferase from Bacillus mycoides (strain KBAB4) (Bacillus weihenstephanensis).